The sequence spans 233 residues: Large ribosomal subunit protein uL22m (233 aa).

The protein belongs to the universal ribosomal protein uL22 family. In terms of assembly, component of the mitochondrial ribosome large subunit (39S) which comprises a 16S rRNA and about 50 distinct proteins.

The protein localises to the mitochondrion. The chain is Large ribosomal subunit protein uL22m (mRpL22) from Drosophila pseudoobscura pseudoobscura (Fruit fly).